The following is a 189-amino-acid chain: MLSMSNDRADTGGRILRAAASCVVDYGVDRVTLAEIARRAGVSRPTVYRRWPDTRSIMASMLTSHIADVLREVPLDGDDREALVKQIVAVADRLRGDDLIMSVMHSELARVYITERLGTSQQVLIEGLAARLTVAQRSGSVRSGDARRLATMVLLIAQSTIQSADIVDSILDSAALATELTHALNGYLC.

Residues Ala-9–Val-69 enclose the HTH tetR-type domain. A DNA-binding region (H-T-H motif) is located at residues Thr-32–Trp-51.

This is an uncharacterized protein from Mycobacterium tuberculosis (strain CDC 1551 / Oshkosh).